A 312-amino-acid chain; its full sequence is Probable splicing factor, arginine/serine-rich 1 (312 aa).

Residues 3–73 (ARIYIGRLTS…ERVILDYSKP (71 aa)) form the RRM 1 domain. 2 disordered regions span residues 69-125 (DYSK…GRPY) and 196-312 (KMID…DGDN). Residues 74-90 (RGGGGDRGGFGGGGRGG) show a composition bias toward gly residues. A compositionally biased stretch (basic and acidic residues) spans 103-121 (GRDRFDRYDRGPPRRESRY). Residues 129 to 202 (HRVVVENLSS…RKIKMIDDSQ (74 aa)) form the RRM 2 domain. Residues 206-259 (SRSRSNSRSRSRSRSRDRRRSRSRSSSRSKSRSRSPPKRSRRESKSKSRSRSRS) are compositionally biased toward basic residues.

This sequence belongs to the splicing factor SR family. Extensively phosphorylated on serine residues in the RS domain.

It is found in the nucleus. Its function is as follows. Plays a functionally redundant role in spermatogenesis and growth rate control. This is Probable splicing factor, arginine/serine-rich 1 (rsp-1) from Caenorhabditis elegans.